The chain runs to 358 residues: DNA polymerase IV (358 aa).

The UmuC domain occupies 4-185 (IIHVDMDCFY…LPLIKIPGVG (182 aa)). Asp-8 and Asp-103 together coordinate Mg(2+). Residue Glu-104 is part of the active site.

The protein belongs to the DNA polymerase type-Y family. In terms of assembly, monomer. Mg(2+) is required as a cofactor.

The protein resides in the cytoplasm. It catalyses the reaction DNA(n) + a 2'-deoxyribonucleoside 5'-triphosphate = DNA(n+1) + diphosphate. Its function is as follows. Poorly processive, error-prone DNA polymerase involved in untargeted mutagenesis. Copies undamaged DNA at stalled replication forks, which arise in vivo from mismatched or misaligned primer ends. These misaligned primers can be extended by PolIV. Exhibits no 3'-5' exonuclease (proofreading) activity. May be involved in translesional synthesis, in conjunction with the beta clamp from PolIII. The chain is DNA polymerase IV from Shewanella pealeana (strain ATCC 700345 / ANG-SQ1).